Reading from the N-terminus, the 87-residue chain is UPF0335 protein RL4065 (87 aa).

This sequence belongs to the UPF0335 family.

The protein is UPF0335 protein RL4065 of Rhizobium johnstonii (strain DSM 114642 / LMG 32736 / 3841) (Rhizobium leguminosarum bv. viciae).